A 514-amino-acid polypeptide reads, in one-letter code: Anthranilate synthase component 1 (514 aa).

L-tryptophan-binding positions include threonine 40 and 291–293 (PYM). 328 to 329 (GT) is a chorismate binding site. Glutamate 361 serves as a coordination point for Mg(2+). Residues tyrosine 449, arginine 469, 482-484 (GAG), and glycine 484 each bind chorismate. Glutamate 497 lines the Mg(2+) pocket.

Belongs to the anthranilate synthase component I family. In terms of assembly, heterotetramer consisting of two non-identical subunits: a beta subunit (TrpG) and a large alpha subunit (TrpE). Mg(2+) serves as cofactor.

It catalyses the reaction chorismate + L-glutamine = anthranilate + pyruvate + L-glutamate + H(+). Its pathway is amino-acid biosynthesis; L-tryptophan biosynthesis; L-tryptophan from chorismate: step 1/5. Its activity is regulated as follows. Feedback inhibited by tryptophan. Part of a heterotetrameric complex that catalyzes the two-step biosynthesis of anthranilate, an intermediate in the biosynthesis of L-tryptophan. In the first step, the glutamine-binding beta subunit (TrpG) of anthranilate synthase (AS) provides the glutamine amidotransferase activity which generates ammonia as a substrate that, along with chorismate, is used in the second step, catalyzed by the large alpha subunit of AS (TrpE) to produce anthranilate. In the absence of TrpG, TrpE can synthesize anthranilate directly from chorismate and high concentrations of ammonia. In Buchnera aphidicola subsp. Rhopalosiphum maidis, this protein is Anthranilate synthase component 1 (trpE).